The primary structure comprises 207 residues: Redox-sensing transcriptional repressor Rex (207 aa).

The H-T-H motif DNA-binding region spans 17 to 56 (IYLRYLSYLQQVEVTTVSSQQMGKNLDVNPAQIRKDLAAF). 91–96 (GAGHLG) is a binding site for NAD(+).

This sequence belongs to the transcriptional regulatory Rex family. Homodimer.

It localises to the cytoplasm. Modulates transcription in response to changes in cellular NADH/NAD(+) redox state. The sequence is that of Redox-sensing transcriptional repressor Rex from Brevibacillus brevis (strain 47 / JCM 6285 / NBRC 100599).